A 460-amino-acid polypeptide reads, in one-letter code: Beta-1,3-xylanase TXYA (460 aa).

Positions 1–22 (MKKLAKMISVATLGACAFQAHA) are cleaved as a signal peptide. One can recognise a GH26 domain in the interval 23-337 (LDGKLVPDQG…LSDPKFIRHS (315 aa)). Glutamate 138 acts as the Proton donor in catalysis. Glutamate 234 functions as the Nucleophile in the catalytic mechanism. Residues 347–371 (GNSDGGNGGDNGGDNGGDNGGETPE) form a disordered region. The segment covering 348-366 (NSDGGNGGDNGGDNGGDNG) has biased composition (gly residues). The interval 368-460 (ETPENCTDDF…TVTFTNQVCN (93 aa)) is carbohydrate binding module (CBM). Cystine bridges form between cysteine 373/cysteine 459 and cysteine 404/cysteine 409.

It belongs to the glycosyl hydrolase 26 family.

The enzyme catalyses Random hydrolysis of (1-&gt;3)-beta-D-glycosidic linkages in (1-&gt;3)-beta-D-xylans.. Its activity is regulated as follows. Completely inhibited by Cu(2+), Hg(2+) and N-bromosuccinimide. Strongly inhibited by Ag(+), Zn(2+) and Pb(2+). Moderately inhibited by Fe(3+), Al(3+), Mn(2+), dithiothreitol and p-chloromercuribenzoic acid. Slightly activated by Mg(2+) and Ca(2+). Unaffected by Na(+), K(+), Ba(2+), EDTA, iodoacetic acid and N-ethylmalaimide. In terms of biological role, catalyzes the hydrolysis of beta-1,3-xylan into oligosaccharides, mainly xylotriose and xylobiose with smaller amounts of xylotetraose, xylose, xylopentaose and xylohexaose. Weakly active toward beta-1,3-xylotriose, yielding xylose and xylobiose. Converts beta-1,3-xylotetraose into xylotriose, xylobiose and xylose. Converts beta-1,3-xylopentaose into xylotetraose, xylotriose, xylobiose and xylose. Does not hydrolyze xylobiose, p-nitrophenyl-beta-xyloside, beta-1,4-xylan, curdlan or carboxymethylcellulose. The polypeptide is Beta-1,3-xylanase TXYA (Vibrio sp).